Reading from the N-terminus, the 299-residue chain is Protein sprouty homolog 4 (299 aa).

N-acetylmethionine is present on Met-1. Disordered regions lie at residues 50–79 (NDYIDNPGLAPPSGPKRTRGGAPELAPTPA) and 92–127 (FSGRPSSVSSSSSTSSDQRLLDHMAPPPVADQASPR). Over residues 92-107 (FSGRPSSVSSSSSTSS) the composition is skewed to low complexity. Ser-125 is modified (phosphoserine). In terms of domain architecture, SPR spans 166-273 (KCKECASPRT…GYDRLRRPGC (108 aa)).

The protein belongs to the sprouty family. As to quaternary structure, interacts (via C-terminus) with TESK1 (via both C- and N-termini); the interaction inhibits TESK1 kinase activity. Interacts with RAF1. Interacts with CAV1 (via C-terminus).

It is found in the cytoplasm. Its subcellular location is the cell projection. The protein resides in the ruffle membrane. Functionally, suppresses the insulin receptor and EGFR-transduced MAPK signaling pathway, but does not inhibit MAPK activation by a constitutively active mutant Ras. Probably impairs the formation of GTP-Ras. Inhibits Ras-independent, but not Ras-dependent, activation of RAF1. Represses integrin-mediated cell spreading via inhibition of TESK1-mediated phosphorylation of cofilin. In Bos taurus (Bovine), this protein is Protein sprouty homolog 4 (SPRY4).